The following is a 264-amino-acid chain: 4-hydroxy-tetrahydrodipicolinate reductase (264 aa).

9-14 (GCSGRM) is an NAD(+) binding site. Arg-36 contacts NADP(+). NAD(+) contacts are provided by residues 100–102 (GTT) and 121–124 (SANM). His-154 functions as the Proton donor/acceptor in the catalytic mechanism. His-155 contributes to the (S)-2,3,4,5-tetrahydrodipicolinate binding site. The active-site Proton donor is the Lys-158. 164 to 165 (GT) is a binding site for (S)-2,3,4,5-tetrahydrodipicolinate.

Belongs to the DapB family.

Its subcellular location is the cytoplasm. It catalyses the reaction (S)-2,3,4,5-tetrahydrodipicolinate + NAD(+) + H2O = (2S,4S)-4-hydroxy-2,3,4,5-tetrahydrodipicolinate + NADH + H(+). The enzyme catalyses (S)-2,3,4,5-tetrahydrodipicolinate + NADP(+) + H2O = (2S,4S)-4-hydroxy-2,3,4,5-tetrahydrodipicolinate + NADPH + H(+). It functions in the pathway amino-acid biosynthesis; L-lysine biosynthesis via DAP pathway; (S)-tetrahydrodipicolinate from L-aspartate: step 4/4. In terms of biological role, catalyzes the conversion of 4-hydroxy-tetrahydrodipicolinate (HTPA) to tetrahydrodipicolinate. In Wolbachia sp. subsp. Brugia malayi (strain TRS), this protein is 4-hydroxy-tetrahydrodipicolinate reductase.